Reading from the N-terminus, the 503-residue chain is MEEFQGYLELYRSQQHDFLYPLIFREYIYALAHDRGLNRSVLLDNVGYDKKSSLLIIKRLISRMYQQNHFLISVNDSNQNKFFGYNKNLYSQIISEGFAVIVEIPFSLRLVSSLKETETVKSYNLRSIHSIFPFFEDKFPHLNYASDVLIPYPIHLEILVQTLRYCVKDPPSLHLLRLFLHEYYNWNTLITPKKSIFAKSNQRLFLLLYNSYVCEYESILLFLRNQSNHLRLTSSGILFERIRFYEKIKYPVEEVFANDFPATLWFFKDPFIQYVRYQGKSILASKDTPLLMNKWKYYLVHFWQCHFYVWSQPGRIHINQLSKHSFDFLGYLSSIRPNISVVRSQLLENSFLMDNAMKKLDTLFPIIPMIGSLAKVKFCNTSGHPISKSSWADSSDSDIIDRFVRIGGNLSHYYSGSSKKKSLYRIKYILRLSCVKTLARKHKSTVRTFLKRLGPKLLDEFFTEEEQIFSLLFPRTSSTLKRFYRGRIWYLDILCINDLVNHE.

This sequence belongs to the intron maturase 2 family. MatK subfamily.

It is found in the plastid. Its subcellular location is the chloroplast. In terms of biological role, usually encoded in the trnK tRNA gene intron. Probably assists in splicing its own and other chloroplast group II introns. The sequence is that of Maturase K from Rosa carolina (Pasture rose).